The primary structure comprises 637 residues: Early transcription factor 70 kDa subunit (637 aa).

One can recognise a Helicase ATP-binding domain in the interval 32-185 (RTIIDENRSV…GHIIDLMSEE (154 aa)). 45 to 52 (HIMGSGKT) provides a ligand contact to ATP. Positions 135-138 (DEAH) match the DEXH box motif. In terms of domain architecture, Helicase C-terminal spans 327-507 (KFKYFINRIQ…VLPFDIKKLL (181 aa)).

Belongs to the helicase family. VETF subfamily. Heterodimer of a 70 kDa and a 82 kDa subunit. Part of the early transcription complex composed of ETF, RAP94/OPG109, and the DNA-directed RNA polymerase.

The protein resides in the virion. In terms of biological role, acts with RNA polymerase to initiate transcription from early gene promoters. Is recruited by the RPO-associated protein of 94 kDa RAP94/OPG109 to form the early transcription complex, which also contains the core RNA polymerase. ETF heterodimer binds to early gene promoters. The sequence is that of Early transcription factor 70 kDa subunit (OPG118) from Homo sapiens (Human).